Reading from the N-terminus, the 294-residue chain is Diphthine synthase (294 aa).

S-adenosyl-L-methionine is bound by residues aspartate 93, valine 96, 121–122 (SG), leucine 173, and alanine 220.

Belongs to the diphthine synthase family. As to quaternary structure, homodimer.

The catalysed reaction is 2-[(3S)-amino-3-carboxypropyl]-L-histidyl-[translation elongation factor 2] + 3 S-adenosyl-L-methionine = diphthine-[translation elongation factor 2] + 3 S-adenosyl-L-homocysteine + 3 H(+). It functions in the pathway protein modification; peptidyl-diphthamide biosynthesis. In terms of biological role, S-adenosyl-L-methionine-dependent methyltransferase that catalyzes the trimethylation of the amino group of the modified target histidine residue in translation elongation factor 2 (EF-2), to form an intermediate called diphthine. The three successive methylation reactions represent the second step of diphthamide biosynthesis. The chain is Diphthine synthase (dphB) from Aeropyrum pernix (strain ATCC 700893 / DSM 11879 / JCM 9820 / NBRC 100138 / K1).